Reading from the N-terminus, the 172-residue chain is Large ribosomal subunit protein uL10 (172 aa).

This sequence belongs to the universal ribosomal protein uL10 family. As to quaternary structure, part of the ribosomal stalk of the 50S ribosomal subunit. The N-terminus interacts with L11 and the large rRNA to form the base of the stalk. The C-terminus forms an elongated spine to which L12 dimers bind in a sequential fashion forming a multimeric L10(L12)X complex.

Functionally, forms part of the ribosomal stalk, playing a central role in the interaction of the ribosome with GTP-bound translation factors. In Acidothermus cellulolyticus (strain ATCC 43068 / DSM 8971 / 11B), this protein is Large ribosomal subunit protein uL10.